The chain runs to 321 residues: Torsin-2A (321 aa).

Residues 1-26 (MAAATRGCRPWGSLLGLLGLVSAAAA) form the signal peptide. 93 to 100 (GWTGTGKS) contributes to the ATP binding site. A glycan (N-linked (GlcNAc...) asparagine) is linked at N149.

Belongs to the ClpA/ClpB family. Torsin subfamily. As to quaternary structure, homohexamer. Interacts with TOR1AIP1. In terms of tissue distribution, isoform 1 is expressed ubiquitously, except in cardiac and endothelial tissues.

It is found in the endoplasmic reticulum lumen. This chain is Torsin-2A (TOR2A), found in Homo sapiens (Human).